The primary structure comprises 316 residues: tRNA dimethylallyltransferase (316 aa).

17–24 (GPTASGKT) provides a ligand contact to ATP. 19-24 (TASGKT) provides a ligand contact to substrate. Interaction with substrate tRNA stretches follow at residues 42 to 45 (DSAL), 166 to 170 (QRLSR), and 247 to 252 (RCVGYR).

Belongs to the IPP transferase family. Monomer. The cofactor is Mg(2+).

The enzyme catalyses adenosine(37) in tRNA + dimethylallyl diphosphate = N(6)-dimethylallyladenosine(37) in tRNA + diphosphate. Functionally, catalyzes the transfer of a dimethylallyl group onto the adenine at position 37 in tRNAs that read codons beginning with uridine, leading to the formation of N6-(dimethylallyl)adenosine (i(6)A). The chain is tRNA dimethylallyltransferase from Citrobacter koseri (strain ATCC BAA-895 / CDC 4225-83 / SGSC4696).